A 39-amino-acid polypeptide reads, in one-letter code: U1-ectatotoxin-Et1b subunit A (39 aa).

An intrachain disulfide couples C14 to C35.

Belongs to the ectatomin family. Ectatomin-Et subfamily. As to quaternary structure, heterodimer of subunits A and B; disulfide-linked. Expressed by the venom gland.

The protein localises to the secreted. It is found in the target cell membrane. The sequence is that of U1-ectatotoxin-Et1b subunit A from Ectatomma tuberculatum (Selva ant).